The primary structure comprises 881 residues: DNA mismatch repair protein MutS (881 aa).

Residue 626 to 633 coordinates ATP; that stretch reads GPNMAGKS.

Belongs to the DNA mismatch repair MutS family.

This protein is involved in the repair of mismatches in DNA. It is possible that it carries out the mismatch recognition step. This protein has a weak ATPase activity. The sequence is that of DNA mismatch repair protein MutS from Desulfosudis oleivorans (strain DSM 6200 / JCM 39069 / Hxd3) (Desulfococcus oleovorans).